We begin with the raw amino-acid sequence, 292 residues long: Glycine--tRNA ligase alpha subunit (292 aa).

It belongs to the class-II aminoacyl-tRNA synthetase family. As to quaternary structure, tetramer of two alpha and two beta subunits.

The protein resides in the cytoplasm. The catalysed reaction is tRNA(Gly) + glycine + ATP = glycyl-tRNA(Gly) + AMP + diphosphate. The protein is Glycine--tRNA ligase alpha subunit of Buchnera aphidicola subsp. Schizaphis graminum (strain Sg).